Here is a 589-residue protein sequence, read N- to C-terminus: MSQVRSPFVVVMGHVDVGKTLLLDKIRGTSVAYREPGMITQHIGMSFVPWSAVEKFAGPLVDRLRLRGRIWIPGFLFIDTPGHAAFSNLRKRGGSVADLAILVVDITSGLEEQGVESLKLIQSRGVPFVIAANKLDRIYGWKSVENRPFLFAVEDQEWHAVATLEERIGKLIEELSRHGIDADRYDRVRDFSKQVPIVPTSAVTGEGIADLLLVLAGVSQRFIPRERLQVREGPAKGVVMEVKEERGLGVVADVILYDGTLRKGDVLVTASLEGPKEARVRMLIMPKPLEEMRDPEDKFMAVEEVKAAAGVRVVADGLEGVVAGSPLIAVWDPREIPNACNLVKEEISEIRIESDKEGVIVRADTFGTLESIVLFLRQQGVPVRKADVGPPTHKDVVEAVLSRRKNPIYGVILAFNVKTPPEVEKEAMSSGIKIIAGEILYRIFDEYIKWSQEVRTKTIEQILSQLTRPGKIQILPGFVFRRSDPAIVGVKVLAGTIKPGVTLVKDGREVGRIMQIQKTGRAINEAAAGDEVAISIHGDVIVGRQIKEGDILYVYVPDDQARQWLFQYRQYLREDELKALEEYLKSRRK.

The region spanning valine 4–arginine 225 is the tr-type G domain. The interval glycine 13–threonine 20 is G1. Glycine 13 to threonine 20 provides a ligand contact to GTP. A G2 region spans residues methionine 38–histidine 42. The segment at aspartate 79 to glycine 82 is G3. Residues aspartate 79–histidine 83 and asparagine 133–aspartate 136 each bind GTP. The interval asparagine 133 to aspartate 136 is G4. Positions serine 201–valine 203 are G5.

This sequence belongs to the TRAFAC class translation factor GTPase superfamily. Classic translation factor GTPase family. IF-2 subfamily.

Functionally, function in general translation initiation by promoting the binding of the formylmethionine-tRNA to ribosomes. Seems to function along with eIF-2. The protein is Probable translation initiation factor IF-2 of Pyrobaculum aerophilum (strain ATCC 51768 / DSM 7523 / JCM 9630 / CIP 104966 / NBRC 100827 / IM2).